The primary structure comprises 179 residues: NAD(P)H-quinone oxidoreductase subunit 6, chloroplastic (179 aa).

Transmembrane regions (helical) follow at residues 8–28, 30–50, 58–78, 98–118, and 150–170; these read ITLF…VFFN, IIYS…LYLL, VAQV…AIML, SFCV…TTPW, and VLPF…AVII.

It belongs to the complex I subunit 6 family. In terms of assembly, NDH is composed of at least 16 different subunits, 5 of which are encoded in the nucleus.

It localises to the plastid. The protein resides in the chloroplast thylakoid membrane. It carries out the reaction a plastoquinone + NADH + (n+1) H(+)(in) = a plastoquinol + NAD(+) + n H(+)(out). The enzyme catalyses a plastoquinone + NADPH + (n+1) H(+)(in) = a plastoquinol + NADP(+) + n H(+)(out). NDH shuttles electrons from NAD(P)H:plastoquinone, via FMN and iron-sulfur (Fe-S) centers, to quinones in the photosynthetic chain and possibly in a chloroplast respiratory chain. The immediate electron acceptor for the enzyme in this species is believed to be plastoquinone. Couples the redox reaction to proton translocation, and thus conserves the redox energy in a proton gradient. This chain is NAD(P)H-quinone oxidoreductase subunit 6, chloroplastic (ndhG), found in Chaetosphaeridium globosum (Charophycean green alga).